The following is a 155-amino-acid chain: Small ribosomal subunit protein uS13 (155 aa).

Basic residues predominate over residues 135–145 (QHTKTTGRRGR). The tract at residues 135–155 (QHTKTTGRRGRTVGVSRTKGA) is disordered. Low complexity predominate over residues 146-155 (TVGVSRTKGA).

The protein belongs to the universal ribosomal protein uS13 family. As to quaternary structure, component of the small ribosomal subunit.

The protein resides in the cytoplasm. Component of the small ribosomal subunit. The ribosome is a large ribonucleoprotein complex responsible for the synthesis of proteins in the cell. The sequence is that of Small ribosomal subunit protein uS13 (RPS18) from Entamoeba histolytica (strain ATCC 30459 / HM-1:IMSS / ABRM).